The following is a 577-amino-acid chain: Solute carrier family 22 member 16 (577 aa).

Residues 23 to 43 form a helical membrane-spanning segment; that stretch reads LYFICAFQNISCGIHYLASVF. 4 N-linked (GlcNAc...) asparagine glycosylation sites follow: Asn-57, Asn-65, Asn-68, and Asn-108. 5 helical membrane-spanning segments follow: residues 152 to 172, 183 to 203, 214 to 234, 244 to 264, and 268 to 288; these read WLAM…SVTF, VVLW…AFAV, FLAM…MEFI, VHLH…GYLV, and WLYQ…CWVL. Asn-345 and Asn-352 each carry an N-linked (GlcNAc...) asparagine glycan. The next 6 membrane-spanning stretches (helical) occupy residues 359-379, 389-409, 416-436, 441-461, 476-496, and 501-521; these read TLTV…FSLN, LNLF…CIAM, TVLA…MVIP, ILGV…FGLI, LAVG…PFSV, and IWIF…GVLT. The tract at residues 543-577 is disordered; the sequence is ESENESKSSKLLLTTNNSGLEKTEAITPRDSGLGE. N-linked (GlcNAc...) asparagine glycosylation is found at Asn-546 and Asn-558. Residues 551–560 are compositionally biased toward low complexity; the sequence is SKLLLTTNNS.

The protein belongs to the major facilitator (TC 2.A.1) superfamily. Organic cation transporter (TC 2.A.1.19) family. As to expression, expressed in testis and epididymis (at protein level). Expressed in endometrium (at protein level); highly expressed during the normal secretory phase, but expression is significantly reduced in the proliferative phase. Expressed at lower levels in adult tissues including bone marrow (at protein level). Expressed in hematopoietic cells, including CD34(+) leukocytes. Expressed in fetal liver (at protein level), brain, lung, kidney, heart, skeletal muscle, spleen and thymus. Expressed in leukemia cells. Abundantly expressed in ovarian cancer clear-cell adenocarcinoma.

The protein resides in the cell membrane. It carries out the reaction (R)-carnitine(in) = (R)-carnitine(out). It catalyses the reaction spermidine(in) = spermidine(out). Its function is as follows. Facilitative organic cation transporter that mediates the transport of carnitine as well as the polyamine spermidine. Mediates the partially Na(+)-dependent bidirectional transport of carnitine. May mediate L-carnitine secretion from testis epididymal epithelium into the lumen which is involved in the maturation of spermatozoa. This is Solute carrier family 22 member 16 from Homo sapiens (Human).